Reading from the N-terminus, the 189-residue chain is Protein GrpE (189 aa).

The span at 1 to 14 (MTEKNEEVVEDKNI) shows a compositional bias: basic and acidic residues. The segment at 1–38 (MTEKNEEVVEDKNISDQTDENLTEEIESEADDLQVEPD) is disordered. Acidic residues predominate over residues 17–35 (QTDENLTEEIESEADDLQV).

Belongs to the GrpE family. Homodimer.

It is found in the cytoplasm. Participates actively in the response to hyperosmotic and heat shock by preventing the aggregation of stress-denatured proteins, in association with DnaK and GrpE. It is the nucleotide exchange factor for DnaK and may function as a thermosensor. Unfolded proteins bind initially to DnaJ; upon interaction with the DnaJ-bound protein, DnaK hydrolyzes its bound ATP, resulting in the formation of a stable complex. GrpE releases ADP from DnaK; ATP binding to DnaK triggers the release of the substrate protein, thus completing the reaction cycle. Several rounds of ATP-dependent interactions between DnaJ, DnaK and GrpE are required for fully efficient folding. This is Protein GrpE from Leuconostoc mesenteroides subsp. mesenteroides (strain ATCC 8293 / DSM 20343 / BCRC 11652 / CCM 1803 / JCM 6124 / NCDO 523 / NBRC 100496 / NCIMB 8023 / NCTC 12954 / NRRL B-1118 / 37Y).